Here is a 105-residue protein sequence, read N- to C-terminus: Large ribosomal subunit protein uL24 (105 aa).

This sequence belongs to the universal ribosomal protein uL24 family. As to quaternary structure, part of the 50S ribosomal subunit.

Its function is as follows. One of two assembly initiator proteins, it binds directly to the 5'-end of the 23S rRNA, where it nucleates assembly of the 50S subunit. Functionally, one of the proteins that surrounds the polypeptide exit tunnel on the outside of the subunit. The polypeptide is Large ribosomal subunit protein uL24 (Xylella fastidiosa (strain 9a5c)).